Reading from the N-terminus, the 231-residue chain is Small ribosomal subunit protein uS3 (231 aa).

The region spanning Ile39–Arg107 is the KH type-2 domain.

This sequence belongs to the universal ribosomal protein uS3 family. As to quaternary structure, part of the 30S ribosomal subunit. Forms a tight complex with proteins S10 and S14.

Its function is as follows. Binds the lower part of the 30S subunit head. Binds mRNA in the 70S ribosome, positioning it for translation. This Novosphingobium aromaticivorans (strain ATCC 700278 / DSM 12444 / CCUG 56034 / CIP 105152 / NBRC 16084 / F199) protein is Small ribosomal subunit protein uS3.